The following is a 347-amino-acid chain: GMP reductase (347 aa).

Position 108 to 131 (108 to 131 (ADFEKTKQILDLNPALNFVCIDVA)) interacts with NADP(+). Residues Gly-181 and Gly-183 each contribute to the K(+) site. Cys-186 functions as the Thioimidate intermediate in the catalytic mechanism. 216–239 (IVSDGGCTTPGDVAKAFGGGADFV) is an NADP(+) binding site.

Belongs to the IMPDH/GMPR family. GuaC type 1 subfamily. As to quaternary structure, homotetramer.

The enzyme catalyses IMP + NH4(+) + NADP(+) = GMP + NADPH + 2 H(+). Its function is as follows. Catalyzes the irreversible NADPH-dependent deamination of GMP to IMP. It functions in the conversion of nucleobase, nucleoside and nucleotide derivatives of G to A nucleotides, and in maintaining the intracellular balance of A and G nucleotides. This chain is GMP reductase, found in Escherichia coli O127:H6 (strain E2348/69 / EPEC).